The primary structure comprises 217 residues: Growth hormone variant (217 aa).

Positions 1–26 are cleaved as a signal peptide; sequence MAAGSWTCLILAIALLCLPWLQEGSA. 2 disulfide bridges follow: cysteine 79/cysteine 191 and cysteine 208/cysteine 215. 2 positions are modified to phosphoserine: serine 132 and serine 176.

Belongs to the somatotropin/prolactin family. As to expression, expressed in the placenta.

Its subcellular location is the secreted. Functionally, plays an important role in growth control. Its major role in stimulating body growth is to stimulate the liver and other tissues to secrete IGF1. It stimulates both the differentiation and proliferation of myoblasts. It also stimulates amino acid uptake and protein synthesis in muscle and other tissues. The chain is Growth hormone variant (GH2) from Macaca mulatta (Rhesus macaque).